The sequence spans 413 residues: Serine hydroxymethyltransferase (413 aa).

(6S)-5,6,7,8-tetrahydrofolate contacts are provided by residues Leu117 and 121–123; that span reads GHL. Position 226 is an N6-(pyridoxal phosphate)lysine (Lys226). 349–351 contacts (6S)-5,6,7,8-tetrahydrofolate; it reads SPF.

The protein belongs to the SHMT family. Homodimer. Pyridoxal 5'-phosphate serves as cofactor.

The protein resides in the cytoplasm. It carries out the reaction (6R)-5,10-methylene-5,6,7,8-tetrahydrofolate + glycine + H2O = (6S)-5,6,7,8-tetrahydrofolate + L-serine. The protein operates within one-carbon metabolism; tetrahydrofolate interconversion. It functions in the pathway amino-acid biosynthesis; glycine biosynthesis; glycine from L-serine: step 1/1. Functionally, catalyzes the reversible interconversion of serine and glycine with tetrahydrofolate (THF) serving as the one-carbon carrier. This reaction serves as the major source of one-carbon groups required for the biosynthesis of purines, thymidylate, methionine, and other important biomolecules. Also exhibits THF-independent aldolase activity toward beta-hydroxyamino acids, producing glycine and aldehydes, via a retro-aldol mechanism. The chain is Serine hydroxymethyltransferase from Listeria monocytogenes serotype 4b (strain F2365).